The sequence spans 175 residues: ATP synthase subunit delta (175 aa).

This sequence belongs to the ATPase delta chain family. In terms of assembly, F-type ATPases have 2 components, F(1) - the catalytic core - and F(0) - the membrane proton channel. F(1) has five subunits: alpha(3), beta(3), gamma(1), delta(1), epsilon(1). F(0) has three main subunits: a(1), b(2) and c(10-14). The alpha and beta chains form an alternating ring which encloses part of the gamma chain. F(1) is attached to F(0) by a central stalk formed by the gamma and epsilon chains, while a peripheral stalk is formed by the delta and b chains.

It localises to the cell inner membrane. In terms of biological role, f(1)F(0) ATP synthase produces ATP from ADP in the presence of a proton or sodium gradient. F-type ATPases consist of two structural domains, F(1) containing the extramembraneous catalytic core and F(0) containing the membrane proton channel, linked together by a central stalk and a peripheral stalk. During catalysis, ATP synthesis in the catalytic domain of F(1) is coupled via a rotary mechanism of the central stalk subunits to proton translocation. Functionally, this protein is part of the stalk that links CF(0) to CF(1). It either transmits conformational changes from CF(0) to CF(1) or is implicated in proton conduction. This chain is ATP synthase subunit delta, found in Xylella fastidiosa (strain M12).